The sequence spans 384 residues: Sphingosine 1-phosphate receptor 3 (384 aa).

Residues 1-34 are Extracellular-facing; that stretch reads MMINPLIYLHYNYTGKLDHRPTVGTSPGTRDPKT. The N-linked (GlcNAc...) asparagine glycan is linked to Asn-12. A helical membrane pass occupies residues 35–55; the sequence is IAFLVVCSFIILENLTVLLAI. At 56 to 64 the chain is on the cytoplasmic side; it reads WKNHRFHNR. Residues 65-85 form a helical membrane-spanning segment; sequence MYFFIGNLALCDLLASVAYLV. The Extracellular segment spans residues 86–105; it reads NLLLSGEKTLQLSPVLWFVR. Residues 106-126 form a helical membrane-spanning segment; it reads EGSMFVTLGASIFSLLAIAIE. Topologically, residues 127–144 are cytoplasmic; the sequence is RHLTMIKMRPYDASKNYR. A helical transmembrane segment spans residues 145–165; it reads VFLLIGTCWLVAVLLGALPIL. Residues 166 to 186 lie on the Extracellular side of the membrane; that stretch reads GWNCLGNLPDCSTILPLYTKK. The chain crosses the membrane as a helical span at residues 187–207; that stretch reads YVAFCIIVFIVLLLAMSVLYA. Topologically, residues 208-235 are cytoplasmic; sequence RIYILVKSSSQKVSKHRNSEHAMSLLRT. The helical transmembrane segment at 236 to 256 threads the bilayer; the sequence is VIIVVGVFIACWMPIFVLLLL. Topologically, residues 257-271 are extracellular; the sequence is DVACERPCPILYKAD. A helical membrane pass occupies residues 272–292; that stretch reads WFIAVAVLNSAMNPIIYTLAS. The Cytoplasmic segment spans residues 293-384; sequence REMRRAFLGL…REGEGGNGGR (92 aa). Composition is skewed to polar residues over residues 315–325 and 336–347; these read NDSGNKQFQEP and QTHPNQSQQSSR. A disordered region spans residues 315-384; the sequence is NDSGNKQFQE…REGEGGNGGR (70 aa). Positions 349–359 are enriched in basic and acidic residues; sequence AELDREQETGH.

It belongs to the G-protein coupled receptor 1 family.

The protein resides in the cell membrane. Receptor for the lysosphingolipid sphingosine 1-phosphate (S1P). The chain is Sphingosine 1-phosphate receptor 3 (s1pr3) from Takifugu rubripes (Japanese pufferfish).